Consider the following 527-residue polypeptide: MDEGTLEAAITAYSAQLQQVESALLAGLDPSQQADLLKLKEDLSQLIELTEASLVSVKKSRLLATLEEDDGLQSLATGTPANGGLDNEFAAFYSEVGEVSGSSSDMREREDEREEEDDGEVEGEVDALSGTKVRAPYRTSWGTLEYHNAMIVGTESCDRNEAQVRVLYVHPTQKSMKPCPFFLEDKCRFADNCRFSHGEVVYVSELREFLESDLTNLQEGSSCLARQDDGIWYSGKITDIDNDFYTVKFDSALLKNVMVEADGVIPPLREDDLPSCSDSEDDDNGEGEAAFPRVLTQEEDWAPSRSSSAFGGWEAHTRGIGSKLMLKMGYEYGKGLGKTSEGRVEPVLAVVLPKGKSLDQCAELTARKTQRKVAKGKDGQQVSRNKRTRKARAHNTGGCHNVFDFLNRKLGNGDANPEAGGTCGPPPSHTPSSQGAGVEAYKGGKSTKRNLNVKLFQAAERVAQTEREIQRLTESLSRRTGRDSSMVTHLEEKLSAARSLLVQQKAQELSAQRENRKADTHKKMTEF.

The tract at residues 97–126 (GEVSGSSSDMREREDEREEEDDGEVEGEVD) is disordered. Residues 111 to 125 (DEREEEDDGEVEGEV) are compositionally biased toward acidic residues. The C3H1-type zinc-finger motif lies at 173–200 (QKSMKPCPFFLEDKCRFADNCRFSHGEV). The segment at 268-312 (LREDDLPSCSDSEDDDNGEGEAAFPRVLTQEEDWAPSRSSSAFGG) is disordered. Residues 317-363 (TRGIGSKLMLKMGYEYGKGLGKTSEGRVEPVLAVVLPKGKSLDQCAE) enclose the G-patch domain. 3 disordered regions span residues 369–396 (TQRK…AHNT), 410–444 (LGNG…YKGG), and 505–527 (KAQE…MTEF). Positions 384-393 (RNKRTRKARA) are enriched in basic residues. Residues 511–527 (AQRENRKADTHKKMTEF) are compositionally biased toward basic and acidic residues.

It localises to the nucleus. Functionally, transcription repressor that specifically binds the 5'-GGAG[GA]A[GA]A-3' consensus sequence. Represses transcription by recruiting the chromatin multiprotein complex NuRD to target promoters. Negatively regulates expression of EGFR, a gene involved in cell proliferation, survival and migration. In Salmo salar (Atlantic salmon), this protein is Zinc finger CCCH-type with G patch domain-containing protein (zgpat).